The chain runs to 417 residues: Tryptophan synthase beta chain (417 aa).

Lysine 110 is subject to N6-(pyridoxal phosphate)lysine.

Belongs to the TrpB family. Tetramer of two alpha and two beta chains. It depends on pyridoxal 5'-phosphate as a cofactor.

The catalysed reaction is (1S,2R)-1-C-(indol-3-yl)glycerol 3-phosphate + L-serine = D-glyceraldehyde 3-phosphate + L-tryptophan + H2O. It functions in the pathway amino-acid biosynthesis; L-tryptophan biosynthesis; L-tryptophan from chorismate: step 5/5. Functionally, the beta subunit is responsible for the synthesis of L-tryptophan from indole and L-serine. The protein is Tryptophan synthase beta chain of Prochlorococcus marinus (strain NATL1A).